A 268-amino-acid polypeptide reads, in one-letter code: Tryptophan synthase alpha chain (268 aa).

Active-site proton acceptor residues include E49 and D60.

It belongs to the TrpA family. Tetramer of two alpha and two beta chains.

The catalysed reaction is (1S,2R)-1-C-(indol-3-yl)glycerol 3-phosphate + L-serine = D-glyceraldehyde 3-phosphate + L-tryptophan + H2O. It participates in amino-acid biosynthesis; L-tryptophan biosynthesis; L-tryptophan from chorismate: step 5/5. The alpha subunit is responsible for the aldol cleavage of indoleglycerol phosphate to indole and glyceraldehyde 3-phosphate. The polypeptide is Tryptophan synthase alpha chain (Aliivibrio fischeri (strain MJ11) (Vibrio fischeri)).